The sequence spans 202 residues: Thymidine kinase (202 aa).

ATP-binding positions include 16 to 23 and 99 to 102; these read GPMFSGKS and DEVQ. Residue Glu-100 is the Proton acceptor of the active site. Zn(2+) is bound by residues Cys-156, Cys-159, Cys-194, and His-197.

The protein belongs to the thymidine kinase family. In terms of assembly, homotetramer.

It is found in the cytoplasm. The enzyme catalyses thymidine + ATP = dTMP + ADP + H(+). In Deinococcus deserti (strain DSM 17065 / CIP 109153 / LMG 22923 / VCD115), this protein is Thymidine kinase.